The sequence spans 139 residues: Chorion protein S16 (139 aa).

The N-terminal stretch at 1–21 (MSVNYMRLLCLMACCFSVCLA) is a signal peptide.

The protein belongs to the chorion protein S16 family.

It is found in the secreted. Functionally, chorion membrane (egg shell) protein; plays a role in protecting the egg from the environment. The sequence is that of Chorion protein S16 (Cp16) from Drosophila virilis (Fruit fly).